The sequence spans 331 residues: PIN2/TERF1-interacting telomerase inhibitor 1 (331 aa).

3 disordered regions span residues 1-28 (MSML…DDSK), 156-175 (AQDG…LTTT), and 197-331 (SKSQ…KVSR). In terms of domain architecture, G-patch spans 26–72 (DSKFGQKMLEKMGWSKGKGLGAQEQGATEHIKVKVKNNHLGLGATNN). Residue Ser-233 is modified to Phosphoserine. The segment covering 236–246 (HKAKRHKKKKR) has biased composition (basic residues). Over residues 247–261 (VEAERGPAAKKRDQV) the composition is skewed to basic and acidic residues. The segment at 254–328 (AAKKRDQVEL…DSAPVKKKKK (75 aa)) is telomerase inhibitory domain (TID). Ser-269, Ser-274, and Ser-277 each carry phosphoserine. The TBM signature appears at 291 to 301 (QDDVPKPRKRR). The span at 297-306 (PRKRRAKKTL) shows a compositional bias: basic residues.

This sequence belongs to the PINX1 family. In terms of assembly, interacts with MCRS1, TERT, TERF1, NCL/nucleolin, and the telomerase RNA.

It localises to the nucleus. Its subcellular location is the nucleolus. The protein resides in the chromosome. It is found in the telomere. The protein localises to the centromere. It localises to the kinetochore. Its function is as follows. Microtubule-binding protein essential for faithful chromosome segregation. Mediates TRF1 and TERT accumulation in nucleolus and enhances TRF1 binding to telomeres. Inhibits telomerase activity. May inhibit cell proliferation and act as tumor suppressor. The polypeptide is PIN2/TERF1-interacting telomerase inhibitor 1 (Rattus norvegicus (Rat)).